The sequence spans 171 residues: Large ribosomal subunit protein bL17 (171 aa).

Residues 140-152 (KREIQTKAREEKR) show a composition bias toward basic and acidic residues. The interval 140 to 171 (KREIQTKAREEKRATRKSNSAPVSKETTSKKK) is disordered. Positions 156–165 (KSNSAPVSKE) are enriched in polar residues.

Belongs to the bacterial ribosomal protein bL17 family. In terms of assembly, part of the 50S ribosomal subunit. Contacts protein L32.

The protein is Large ribosomal subunit protein bL17 of Leptospira interrogans serogroup Icterohaemorrhagiae serovar copenhageni (strain Fiocruz L1-130).